A 418-amino-acid chain; its full sequence is UDP-N-acetylglucosamine 1-carboxyvinyltransferase (418 aa).

22–23 provides a ligand contact to phosphoenolpyruvate; it reads KN. Residue Arg92 participates in UDP-N-acetyl-alpha-D-glucosamine binding. Cys116 serves as the catalytic Proton donor. The residue at position 116 (Cys116) is a 2-(S-cysteinyl)pyruvic acid O-phosphothioketal. Residues Asp306 and Ile328 each coordinate UDP-N-acetyl-alpha-D-glucosamine.

The protein belongs to the EPSP synthase family. MurA subfamily.

The protein resides in the cytoplasm. The catalysed reaction is phosphoenolpyruvate + UDP-N-acetyl-alpha-D-glucosamine = UDP-N-acetyl-3-O-(1-carboxyvinyl)-alpha-D-glucosamine + phosphate. It functions in the pathway cell wall biogenesis; peptidoglycan biosynthesis. Functionally, cell wall formation. Adds enolpyruvyl to UDP-N-acetylglucosamine. This Solibacter usitatus (strain Ellin6076) protein is UDP-N-acetylglucosamine 1-carboxyvinyltransferase.